Consider the following 465-residue polypeptide: Adenosylhomocysteinase (465 aa).

Substrate contacts are provided by T56, D131, and E191. An NAD(+)-binding site is contributed by T192–T194. Substrate is bound by residues K221 and D225. NAD(+) is bound by residues N226, G255 to G260, E278, N313, I334 to H336, and N379.

It belongs to the adenosylhomocysteinase family. NAD(+) serves as cofactor.

It is found in the cytoplasm. The enzyme catalyses S-adenosyl-L-homocysteine + H2O = L-homocysteine + adenosine. The protein operates within amino-acid biosynthesis; L-homocysteine biosynthesis; L-homocysteine from S-adenosyl-L-homocysteine: step 1/1. Functionally, may play a key role in the regulation of the intracellular concentration of adenosylhomocysteine. The sequence is that of Adenosylhomocysteinase from Bartonella tribocorum (strain CIP 105476 / IBS 506).